The primary structure comprises 429 residues: Enolase (429 aa).

Q163 is a binding site for (2R)-2-phosphoglycerate. The active-site Proton donor is E205. Residues D242, E286, and D313 each coordinate Mg(2+). 4 residues coordinate (2R)-2-phosphoglycerate: K338, R367, S368, and K389. The Proton acceptor role is filled by K338.

The protein belongs to the enolase family. The cofactor is Mg(2+).

It localises to the cytoplasm. Its subcellular location is the secreted. It is found in the cell surface. The enzyme catalyses (2R)-2-phosphoglycerate = phosphoenolpyruvate + H2O. It participates in carbohydrate degradation; glycolysis; pyruvate from D-glyceraldehyde 3-phosphate: step 4/5. Functionally, catalyzes the reversible conversion of 2-phosphoglycerate (2-PG) into phosphoenolpyruvate (PEP). It is essential for the degradation of carbohydrates via glycolysis. The polypeptide is Enolase (Citrifermentans bemidjiense (strain ATCC BAA-1014 / DSM 16622 / JCM 12645 / Bem) (Geobacter bemidjiensis)).